Here is a 176-residue protein sequence, read N- to C-terminus: MGFPKEGEKVQIHSYKHNGSIHRMWEETTILKGTQSLVIGANDRTVVTESDGRTWITREPAICYFHANYWFNVIGMLREDGVYYYCNLSSPFAYDSEALKYIDYDLDIKVYPDMTYTLLDEDEYEKHSQIMQYPPVIDTILKRNVAHLTQWIHQRKGPFAPDFVDMWYERYLMYRN.

The active-site Proton donor is arginine 23. The Mg(2+) site is built by asparagine 87, aspartate 103, aspartate 105, aspartate 107, aspartate 120, and glutamate 123.

The protein belongs to the Ntdp family. The cofactor is Mg(2+).

The catalysed reaction is a ribonucleoside 5'-triphosphate + H2O = a ribonucleoside 5'-diphosphate + phosphate + H(+). It carries out the reaction a ribonucleoside 5'-diphosphate + H2O = a ribonucleoside 5'-phosphate + phosphate + H(+). In terms of biological role, has nucleoside phosphatase activity towards nucleoside triphosphates and nucleoside diphosphates. This is Nucleoside triphosphate/diphosphate phosphatase from Bacillus cereus (strain G9842).